We begin with the raw amino-acid sequence, 487 residues long: N-succinylglutamate 5-semialdehyde dehydrogenase (487 aa).

NAD(+) is bound at residue 221 to 226 (GSSRTG). Active-site residues include E244 and C278.

Belongs to the aldehyde dehydrogenase family. AstD subfamily.

It carries out the reaction N-succinyl-L-glutamate 5-semialdehyde + NAD(+) + H2O = N-succinyl-L-glutamate + NADH + 2 H(+). It functions in the pathway amino-acid degradation; L-arginine degradation via AST pathway; L-glutamate and succinate from L-arginine: step 4/5. In terms of biological role, catalyzes the NAD-dependent reduction of succinylglutamate semialdehyde into succinylglutamate. The protein is N-succinylglutamate 5-semialdehyde dehydrogenase of Pseudomonas putida (strain ATCC 47054 / DSM 6125 / CFBP 8728 / NCIMB 11950 / KT2440).